The primary structure comprises 284 residues: Nucleotide-binding protein TTE1834 (284 aa).

8 to 15 (GLSGAGKT) is a binding site for ATP. Residue 58-61 (DLRG) participates in GTP binding.

It belongs to the RapZ-like family.

Its function is as follows. Displays ATPase and GTPase activities. The sequence is that of Nucleotide-binding protein TTE1834 from Caldanaerobacter subterraneus subsp. tengcongensis (strain DSM 15242 / JCM 11007 / NBRC 100824 / MB4) (Thermoanaerobacter tengcongensis).